Here is a 149-residue protein sequence, read N- to C-terminus: Large ribosomal subunit protein bL9 (149 aa).

It belongs to the bacterial ribosomal protein bL9 family.

Functionally, binds to the 23S rRNA. The sequence is that of Large ribosomal subunit protein bL9 from Campylobacter curvus (strain 525.92).